The following is a 331-amino-acid chain: Small ribosomal subunit protein uS2 (331 aa).

Belongs to the universal ribosomal protein uS2 family.

This is Small ribosomal subunit protein uS2 from Rhodopseudomonas palustris (strain HaA2).